A 145-amino-acid polypeptide reads, in one-letter code: Bacilliredoxin BH2759 (145 aa).

Belongs to the bacilliredoxin family.

The protein is Bacilliredoxin BH2759 of Halalkalibacterium halodurans (strain ATCC BAA-125 / DSM 18197 / FERM 7344 / JCM 9153 / C-125) (Bacillus halodurans).